Consider the following 164-residue polypeptide: Putative lung carcinoma-associated protein 10 (164 aa).

A disordered region spans residues 1–164 (MSSCPVHDCP…TQKPQTTVGQ (164 aa)). The span at 23-40 (GSRGALRLRGGAPGSAAG) shows a compositional bias: low complexity. Over residues 152–164 (MQKTQKPQTTVGQ) the composition is skewed to polar residues.

The sequence is that of Putative lung carcinoma-associated protein 10 (LCA10) from Homo sapiens (Human).